A 301-amino-acid chain; its full sequence is Averufin oxidase A (301 aa).

Residues 1–23 (MPTYALLGATGATGSAILRCLLA) form the signal peptide. 3 N-linked (GlcNAc...) asparagine glycosylation sites follow: Asn-62, Asn-86, and Asn-190.

Belongs to the avfA family.

The protein operates within mycotoxin biosynthesis. Averufin oxidase A; part of the fragmented gene cluster that mediates the biosynthesis of dothistromin (DOTH), a polyketide toxin very similar in structure to the aflatoxin precursor, versicolorin B. The first step of the pathway is the conversion of acetate to norsolorinic acid (NOR) and requires the fatty acid synthase subunits hexA and hexB, as well as the polyketide synthase pksA. PksA combines a hexanoyl starter unit and 7 malonyl-CoA extender units to synthesize the precursor NOR. The hexanoyl starter unit is provided to the acyl-carrier protein (ACP) domain by the fungal fatty acid synthase hexA/hexB. The second step is the conversion of NOR to averantin (AVN) and requires the norsolorinic acid ketoreductase nor1, which catalyzes the dehydration of norsolorinic acid to form (1'S)-averantin. The cytochrome P450 monooxygenase avnA then catalyzes the hydroxylation of AVN to 5'hydroxyaverantin (HAVN). The next step is performed by adhA that transforms HAVN to averufin (AVF). Averufin might then be converted to hydroxyversicolorone by cypX and avfA. Hydroxyversicolorone is further converted versiconal hemiacetal acetate (VHA) by moxY. VHA is then the substrate for the versiconal hemiacetal acetate esterase est1 to yield versiconal (VAL). Versicolorin B synthase vbsA then converts VAL to versicolorin B (VERB) by closing the bisfuran ring. Then, the activity of the versicolorin B desaturase verB leads to versicolorin A (VERA). DotB, a predicted chloroperoxidase, may perform epoxidation of the A-ring of VERA. Alternatively, a cytochrome P450, such as cypX or avnA could catalyze this step. It is also possible that another, uncharacterized, cytochrome P450 enzyme is responsible for this step. Opening of the epoxide could potentially be achieved by the epoxide hydrolase epoA. However, epoA seems not to be required for DOTH biosynthesis, but other epoxide hydrolases may have the ability to complement this hydrolysis. Alternatively, opening of the epoxide ring could be achieved non-enzymatically. The next step is the deoxygenation of ring A to yield the 5,8-dihydroxyanthraquinone which is most likely catalyzed by the NADPH dehydrogenase encoded by ver1. The last stages of DOTH biosynthesis are proposed to involve hydroxylation of the bisfuran. OrdB and norB might have oxidative roles here. An alternative possibility is that cytochrome P450 monoogenases such as avnA and cypX might perform these steps in addition to previously proposed steps. In Dothistroma septosporum (Red band needle blight fungus), this protein is Averufin oxidase A.